The following is a 222-amino-acid chain: Pyridoxine/pyridoxamine 5'-phosphate oxidase (222 aa).

Substrate is bound by residues 14 to 17 (RRNY) and lysine 71. FMN contacts are provided by residues 66–71 (RTVLLK), 81–82 (FT), arginine 87, lysine 88, and glutamine 110. Substrate contacts are provided by tyrosine 128, arginine 132, and serine 136. FMN is bound by residues 145–146 (QS) and tryptophan 190. 196–198 (RLN) contributes to the substrate binding site. Arginine 200 is a binding site for FMN.

This sequence belongs to the pyridoxamine 5'-phosphate oxidase family. In terms of assembly, homodimer. The cofactor is FMN.

It carries out the reaction pyridoxamine 5'-phosphate + O2 + H2O = pyridoxal 5'-phosphate + H2O2 + NH4(+). The enzyme catalyses pyridoxine 5'-phosphate + O2 = pyridoxal 5'-phosphate + H2O2. It participates in cofactor metabolism; pyridoxal 5'-phosphate salvage; pyridoxal 5'-phosphate from pyridoxamine 5'-phosphate: step 1/1. It functions in the pathway cofactor metabolism; pyridoxal 5'-phosphate salvage; pyridoxal 5'-phosphate from pyridoxine 5'-phosphate: step 1/1. Its function is as follows. Catalyzes the oxidation of either pyridoxine 5'-phosphate (PNP) or pyridoxamine 5'-phosphate (PMP) into pyridoxal 5'-phosphate (PLP). This chain is Pyridoxine/pyridoxamine 5'-phosphate oxidase, found in Prochlorococcus marinus (strain MIT 9303).